Consider the following 495-residue polypeptide: Transcription termination/antitermination protein NusA (495 aa).

Residues 135–200 enclose the S1 motif domain; it reads GKIVTGTVKK…KTAQLFVTRS (66 aa). One can recognise a KH domain in the interval 302–374; that stretch reads NHSMDIAVEA…LDEEFAQILV (73 aa).

This sequence belongs to the NusA family. Monomer. Binds directly to the core enzyme of the DNA-dependent RNA polymerase and to nascent RNA.

It is found in the cytoplasm. In terms of biological role, participates in both transcription termination and antitermination. This Haemophilus influenzae (strain ATCC 51907 / DSM 11121 / KW20 / Rd) protein is Transcription termination/antitermination protein NusA.